Reading from the N-terminus, the 359-residue chain is Mitochondrial glutathione transporter SLC25A39 (359 aa).

The Mitochondrial intermembrane segment spans residues 1–18; the sequence is MGDRPAVRISAAITPVQQ. Solcar repeat units follow at residues 13 to 149, 157 to 241, and 251 to 346; these read ITPV…LRDF, HGDH…VKAQ, and ASFT…GKTF. Residues 19-39 traverse the membrane as a helical segment; that stretch reads MLASGTGAVLTSLFVTPLDVV. At 40-119 the chain is on the mitochondrial matrix side; the sequence is KIRLQAQQTP…VKITHNEGLR (80 aa). The [2Fe-2S] cluster site is built by cysteine 72, cysteine 76, cysteine 86, and cysteine 92. A helical membrane pass occupies residues 120 to 140; it reads SLWSGLPPTLVMAVPATVIYF. Residues 141 to 162 are Mitochondrial intermembrane-facing; it reads TCYDQLRDFLCYSMGYHGDHIP. Residues 163–183 form a helical membrane-spanning segment; that stretch reads LIAGGLARLGAVSVISPLELV. Over 184–212 the chain is Mitochondrial matrix; the sequence is RTKMQSRRLQYSELMVCIRSSVAQDGWLS. The helical transmembrane segment at 213–233 threads the bilayer; it reads LWRGWGPTVLRDVPFSALYWF. The Mitochondrial intermembrane segment spans residues 234 to 253; sequence NYELVKAQLCEHYRTPQASF. Residues 254-274 traverse the membrane as a helical segment; it reads TISFTAGAVSGAIAAVLTLPF. Topologically, residues 275 to 316 are mitochondrial matrix; sequence DVVKTRRQIQLGEMEALGAVSMKKPSSTWNMMRNIWIDMGYK. A helical transmembrane segment spans residues 317–337; that stretch reads GLFAGFLPRVIKVAPACAVMI. Over 338-359 the chain is Mitochondrial intermembrane; it reads STYEFGKTFFQERNLHQARCGL.

It belongs to the mitochondrial carrier (TC 2.A.29) family. Post-translationally, cleaved and degraded by AFG3L2; degradation by AFG3L2 is regulated by the ability of SLC25A39 to bind iron-sulfur. In absence of mitochondrial glutathione, SLC25A39 binds iron-sulfur, preventing cleavage and degradation by AFG3L2. The presence of mitochondrial glutathione prevents iron-sulfur-binding to SLC25A39, promoting cleavage and degradation by AFG3L2.

It localises to the mitochondrion inner membrane. It catalyses the reaction glutathione(in) = glutathione(out). The activity of SLC25A39 is regulated by levels of mitochondrial glutathione via its ability to bind [2Fe-2S] iron-sulfur cluster. Upon physiological levels of mitochondrial glutathione, glutathione prevents iron-sulfur-binding to SLC25A39 promoting cleavage and degradation by AFG3L2. Upon depletion of mitochondrial glutathione, SLC25A39 binds iron-sulfur, preventing cleavage and degradation by AFG3L2. Mitochondrial transporter required for glutathione import into mitochondria. Glutathione, which plays key roles in oxidative metabolism, is produced exclusively in the cytosol and is imported in many organelles. Mitochondrial glutathione is required for the activity and stability of proteins containing iron-sulfur clusters, as well as erythropoiesis. Involved in the early steps of heme biosynthesis. The polypeptide is Mitochondrial glutathione transporter SLC25A39 (slc25a39) (Danio rerio (Zebrafish)).